A 134-amino-acid chain; its full sequence is 6,7-dimethyl-8-ribityllumazine synthase (134 aa).

5-amino-6-(D-ribitylamino)uracil contacts are provided by residues F12, 44–46 (VFD), and 68–70 (SVI). Position 73-74 (73-74 (ET)) interacts with (2S)-2-hydroxy-3-oxobutyl phosphate. The Proton donor role is filled by H76. L101 contacts 5-amino-6-(D-ribitylamino)uracil. A (2S)-2-hydroxy-3-oxobutyl phosphate-binding site is contributed by R116.

The protein belongs to the DMRL synthase family.

It catalyses the reaction (2S)-2-hydroxy-3-oxobutyl phosphate + 5-amino-6-(D-ribitylamino)uracil = 6,7-dimethyl-8-(1-D-ribityl)lumazine + phosphate + 2 H2O + H(+). It functions in the pathway cofactor biosynthesis; riboflavin biosynthesis; riboflavin from 2-hydroxy-3-oxobutyl phosphate and 5-amino-6-(D-ribitylamino)uracil: step 1/2. Its function is as follows. Catalyzes the formation of 6,7-dimethyl-8-ribityllumazine by condensation of 5-amino-6-(D-ribitylamino)uracil with 3,4-dihydroxy-2-butanone 4-phosphate. This is the penultimate step in the biosynthesis of riboflavin. The protein is 6,7-dimethyl-8-ribityllumazine synthase of Methanosarcina acetivorans (strain ATCC 35395 / DSM 2834 / JCM 12185 / C2A).